A 445-amino-acid polypeptide reads, in one-letter code: Argininosuccinate synthase (445 aa).

ATP-binding positions include 17–25 (AFSGGLDTS) and A43. Y99 is a binding site for L-citrulline. 2 residues coordinate ATP: G129 and T131. The L-aspartate site is built by T131, N135, and D136. N135 is a binding site for L-citrulline. Position 136 (D136) interacts with ATP. R139 and S192 together coordinate L-citrulline. Position 194 (D194) interacts with ATP. The L-citrulline site is built by T201, E203, and E280.

Belongs to the argininosuccinate synthase family. Type 2 subfamily. In terms of assembly, homotetramer.

The protein resides in the cytoplasm. It catalyses the reaction L-citrulline + L-aspartate + ATP = 2-(N(omega)-L-arginino)succinate + AMP + diphosphate + H(+). Its pathway is amino-acid biosynthesis; L-arginine biosynthesis; L-arginine from L-ornithine and carbamoyl phosphate: step 2/3. The polypeptide is Argininosuccinate synthase (Bordetella pertussis (strain Tohama I / ATCC BAA-589 / NCTC 13251)).